The following is a 102-amino-acid chain: Small ribosomal subunit protein uS10 (102 aa).

This sequence belongs to the universal ribosomal protein uS10 family. As to quaternary structure, part of the 30S ribosomal subunit.

Its function is as follows. Involved in the binding of tRNA to the ribosomes. This Gluconacetobacter diazotrophicus (strain ATCC 49037 / DSM 5601 / CCUG 37298 / CIP 103539 / LMG 7603 / PAl5) protein is Small ribosomal subunit protein uS10.